Reading from the N-terminus, the 194-residue chain is Large ribosomal subunit protein bL25 (194 aa).

It belongs to the bacterial ribosomal protein bL25 family. CTC subfamily. Part of the 50S ribosomal subunit; part of the 5S rRNA/L5/L18/L25 subcomplex. Contacts the 5S rRNA. Binds to the 5S rRNA independently of L5 and L18.

This is one of the proteins that binds to the 5S RNA in the ribosome where it forms part of the central protuberance. The polypeptide is Large ribosomal subunit protein bL25 (Parabacteroides distasonis (strain ATCC 8503 / DSM 20701 / CIP 104284 / JCM 5825 / NCTC 11152)).